Reading from the N-terminus, the 234-residue chain is Cysteine proteinase inhibitor 6 (234 aa).

The N-terminal stretch at 1–24 (MMRSRFLLFIVFFSLSLFISSLIA) is a signal peptide. Residue M2 is modified to N-acetylalanine. Cystatin domains follow at residues 38–126 (GGVG…KPAS) and 145–215 (SGWR…FKVE). The Secondary area of contact motif lies at 82–86 (QVVAG). A disordered region spans residues 133–154 (SSDLGCKQGEHESGWREVPGDD). A compositionally biased stretch (basic and acidic residues) spans 140–154 (QGEHESGWREVPGDD). Residue S174 is modified to Phosphoserine.

Belongs to the cystatin family. Phytocystatin subfamily.

Its subcellular location is the secreted. Specific inhibitor of cysteine proteinases. Probably involved in the regulation of endogenous processes and in defense against pests and pathogens. The chain is Cysteine proteinase inhibitor 6 (CYS6) from Arabidopsis thaliana (Mouse-ear cress).